The primary structure comprises 129 residues: MQTMEGRQYNYQDSINASSSMVVPHSPWHSPVPYLFGGLAAMLALICVALLILACSYWRLSGSAERDLEAGDDAKPDNDTNKTKHTEMPEKFLVIMAGDVRPTYLATPATRSEQSCTCGDHNEEEGRRG.

Residues 1–34 (MQTMEGRQYNYQDSINASSSMVVPHSPWHSPVPY) lie on the Extracellular side of the membrane. The chain crosses the membrane as a helical span at residues 35–55 (LFGGLAAMLALICVALLILAC). At 56–129 (SYWRLSGSAE…DHNEEEGRRG (74 aa)) the chain is on the cytoplasmic side. The segment at 66–89 (RDLEAGDDAKPDNDTNKTKHTEMP) is disordered. The VIMAG motif lies at 94–98 (VIMAG). A disordered region spans residues 106–129 (ATPATRSEQSCTCGDHNEEEGRRG). Over residues 120–129 (DHNEEEGRRG) the composition is skewed to basic and acidic residues.

The protein belongs to the GLUTAMINE DUMPER 1 (TC 9.B.60) family. As to expression, expressed in the vascular tissues.

The protein resides in the membrane. Functionally, probable subunit of an amino acid transporter involved in the regulation of the amino acid metabolism. Stimulates amino acid export by activating nonselective amino acid facilitators. The protein is Protein GLUTAMINE DUMPER 2 (GDU2) of Arabidopsis thaliana (Mouse-ear cress).